Here is a 180-residue protein sequence, read N- to C-terminus: Photosystem II extrinsic protein V (180 aa).

The first 40 residues, 1-40 (MFSKAFSFQKVFAPARRRLLVLLLAALMAGFGWGLAPVFA), serve as a signal peptide directing secretion. Heme c-binding residues include Cys73, Cys76, His77, and His128.

It belongs to the cytochrome c family. PsbV subfamily. PSII is composed of 1 copy each of membrane proteins PsbA, PsbB, PsbC, PsbD, PsbE, PsbF, PsbH, PsbI, PsbJ, PsbK, PsbL, PsbM, PsbT, PsbX, PsbY, PsbZ, Psb30/Ycf12, peripheral proteins PsbO, CyanoQ (PsbQ), PsbU, PsbV and a large number of cofactors. It forms dimeric complexes. It depends on heme c as a cofactor.

It is found in the cellular thylakoid membrane. One of the extrinsic, lumenal subunits of photosystem II (PSII). PSII is a light-driven water plastoquinone oxidoreductase, using light energy to abstract electrons from H(2)O, generating a proton gradient subsequently used for ATP formation. The extrinsic proteins stabilize the structure of photosystem II oxygen-evolving complex (OEC), the ion environment of oxygen evolution and protect the OEC against heat-induced inactivation. Low-potential cytochrome c that plays a role in the OEC of PSII. The polypeptide is Photosystem II extrinsic protein V (Synechococcus sp. (strain JA-2-3B'a(2-13)) (Cyanobacteria bacterium Yellowstone B-Prime)).